The primary structure comprises 527 residues: ATP synthase subunit alpha (527 aa).

172 to 179 (GDRQTGKT) is a binding site for ATP.

This sequence belongs to the ATPase alpha/beta chains family. F-type ATPases have 2 components, CF(1) - the catalytic core - and CF(0) - the membrane proton channel. CF(1) has five subunits: alpha(3), beta(3), gamma(1), delta(1), epsilon(1). CF(0) has three main subunits: a(1), b(2) and c(9-12). The alpha and beta chains form an alternating ring which encloses part of the gamma chain. CF(1) is attached to CF(0) by a central stalk formed by the gamma and epsilon chains, while a peripheral stalk is formed by the delta and b chains.

The protein localises to the cell inner membrane. It catalyses the reaction ATP + H2O + 4 H(+)(in) = ADP + phosphate + 5 H(+)(out). Its function is as follows. Produces ATP from ADP in the presence of a proton gradient across the membrane. The alpha chain is a regulatory subunit. The chain is ATP synthase subunit alpha from Bacteroides fragilis (strain ATCC 25285 / DSM 2151 / CCUG 4856 / JCM 11019 / LMG 10263 / NCTC 9343 / Onslow / VPI 2553 / EN-2).